The primary structure comprises 254 residues: Mediator of RNA polymerase II transcription subunit 4 (254 aa).

The stretch at 72-114 (RVHQEMQSLEKEVEKRDSDIQQLQKQLKEAEHILATAVYQAKE) forms a coiled coil. A disordered region spans residues 215–254 (ILPPHHGNDFGLEPPGHNKENEDDVEAMSTDSSSSSSDSD). Residues 243 to 254 (STDSSSSSSDSD) show a composition bias toward low complexity.

It belongs to the Mediator complex subunit 4 family. As to quaternary structure, component of the Mediator complex.

It is found in the nucleus. Functionally, component of the Mediator complex, a coactivator involved in the regulated transcription of nearly all RNA polymerase II-dependent genes. Mediator functions as a bridge to convey information from gene-specific regulatory proteins to the basal RNA polymerase II transcription machinery. Mediator is recruited to promoters by direct interactions with regulatory proteins and serves as a scaffold for the assembly of a functional preinitiation complex with RNA polymerase II and the general transcription factors. This chain is Mediator of RNA polymerase II transcription subunit 4 (med4), found in Danio rerio (Zebrafish).